The primary structure comprises 298 residues: UDP-N-acetylenolpyruvoylglucosamine reductase (298 aa).

The region spanning 26-191 (KTGGAADVFV…LDATFSLALE (166 aa)) is the FAD-binding PCMH-type domain. The active site involves arginine 170. The active-site Proton donor is the serine 220. Residue glutamate 290 is part of the active site.

Belongs to the MurB family. The cofactor is FAD.

Its subcellular location is the cytoplasm. The catalysed reaction is UDP-N-acetyl-alpha-D-muramate + NADP(+) = UDP-N-acetyl-3-O-(1-carboxyvinyl)-alpha-D-glucosamine + NADPH + H(+). It participates in cell wall biogenesis; peptidoglycan biosynthesis. Functionally, cell wall formation. The polypeptide is UDP-N-acetylenolpyruvoylglucosamine reductase (Listeria monocytogenes serotype 4b (strain CLIP80459)).